The sequence spans 118 residues: DNA-binding protein M164_1799 (118 aa).

This sequence belongs to the PDCD5 family.

This Saccharolobus islandicus (strain M.16.4 / Kamchatka #3) (Sulfolobus islandicus) protein is DNA-binding protein M164_1799.